The primary structure comprises 558 residues: Atlastin-1 (558 aa).

Residues 1–27 (MAKNRRDRNSWGGFSEKTYEWSSEEEE) are disordered. Residues 1–34 (MAKNRRDRNSWGGFSEKTYEWSSEEEEPVKKAGP) form an N-terminal hypervariable region (HVR) region. The Cytoplasmic segment spans residues 1–449 (MAKNRRDRNS…NIFHAARTPA (449 aa)). Ser10, Ser22, and Ser23 each carry phosphoserine. The region spanning 64 to 309 (DKEVVAVSVA…LIPWLLSPES (246 aa)) is the GB1/RHD3-type G domain. 11 residues coordinate GDP: Arg77, Lys78, Gly79, Lys80, Ser81, Phe82, Gln148, Arg217, Asp218, Val276, and Asn279. Residues Arg77, Lys78, Gly79, Lys80, Ser81, and Phe82 each coordinate GTP. A Mg(2+)-binding site is contributed by Ser81. The GTP site is built by Arg217, Asp218, and Val276. The segment at 347–438 (MLQATAEANN…YIQYIKHNDS (92 aa)) is 3HB (three-helix bundle) domain. Lys395 is modified (N6-acetyllysine). The stretch at 412–439 (EFSRRYLQQLESEIDELYIQYIKHNDSK) forms a coiled coil. Residues 439 to 447 (KNIFHAART) are linker. Residues 450-470 (TLFVVIFITYVIAGVTGFIGL) form a helical membrane-spanning segment. Residue Asp471 is a topological domain, lumenal. A helical membrane pass occupies residues 472 to 492 (IIASLCNMIMGLTLITLCTWA). The Cytoplasmic segment spans residues 493-558 (YIRYSGEYRE…STEQSEKKKM (66 aa)). Positions 521–558 (NEALYKLYSAAATHRHLYHQAFPTPKSESTEQSEKKKM) are autoinhibitory domain.

It belongs to the TRAFAC class dynamin-like GTPase superfamily. GB1/RHD3 GTPase family. GB1 subfamily. As to quaternary structure, monomeric and homodimeric. The homodimer, transiently formed by two molecules on opposing membranes, is the active form mediating ER membrane fusion. Interacts with REEP1, REEP5, RTN3 and RTN4 (via the transmembrane region); these proteins are involved in endoplasmic reticulum tubular network organization. Interacts with ZFYVE27; both proteins are involved in endoplasmic reticulum tubular network organization. Interacts with ARL6IP1; both proteins are involved in endoplasmic reticulum tubular network organization. Interacts with SPAST; the interaction is direct, could recruit SPAST to Golgi membranes. Interacts (via N-terminal region) with MAP4K4 (via CNH regulatory domain). May interact with TMED2. Interacts with CPT1C. Phosphorylated. Phosphorylation, by different kinases, of the N-terminal hypervariable region (HVR) regulates the ATL1-mediated membrane tethering step.

The protein resides in the endoplasmic reticulum membrane. It is found in the golgi apparatus membrane. The protein localises to the cell projection. It localises to the axon. The catalysed reaction is GTP + H2O = GDP + phosphate + H(+). Atlastin-1 (ATL1) is a membrane-anchored GTPase that mediates the GTP-dependent fusion of endoplasmic reticulum (ER) membranes, maintaining the continuous ER network. It facilitates the formation of three-way junctions where ER tubules intersect. Two atlastin-1 on neighboring ER tubules bind GTP and form loose homodimers through the GB1/RHD3-type G domains and 3HB regions. Upon GTP hydrolysis, the 3HB regions tighten, pulling the membranes together to drive their fusion. After fusion, the homodimer disassembles upon release of inorganic phosphate (Pi). Subsequently, GDP dissociates, resetting the monomers to a conformation ready for a new fusion cycle. May also regulate more or less directly Golgi biogenesis. Indirectly regulates axonal development. The chain is Atlastin-1 from Macaca fascicularis (Crab-eating macaque).